We begin with the raw amino-acid sequence, 884 residues long: Protein P (884 aa).

The tract at residues Met1–Gln184 is terminal protein domain (TP). Residues Leu185–Leu387 are spacer. 2 disordered regions span residues Pro218–Thr241 and Arg299–Ser345. Polar residues-rich tracts occupy residues Val222–Thr241 and Tyr323–Tyr332. Positions Asp388 to Gln729 are polymerase/reverse transcriptase domain (RT). Positions Asp398–Ile639 constitute a Reverse transcriptase domain. Residues Asp470, Asp590, and Asp591 each contribute to the Mg(2+) site.

Belongs to the hepadnaviridae P protein family.

It catalyses the reaction DNA(n) + a 2'-deoxyribonucleoside 5'-triphosphate = DNA(n+1) + diphosphate. It carries out the reaction Endonucleolytic cleavage to 5'-phosphomonoester.. Its activity is regulated as follows. Activated by host HSP70 and HSP40 in vitro to be able to bind the epsilon loop of the pgRNA. Because deletion of the RNase H region renders the protein partly chaperone-independent, the chaperones may be needed indirectly to relieve occlusion of the RNA-binding site by this domain. Inhibited by several reverse-transcriptase inhibitors: Lamivudine, Adefovir and Entecavir. Its function is as follows. Multifunctional enzyme that converts the viral RNA genome into dsDNA in viral cytoplasmic capsids. This enzyme displays a DNA polymerase activity that can copy either DNA or RNA templates, and a ribonuclease H (RNase H) activity that cleaves the RNA strand of RNA-DNA heteroduplexes in a partially processive 3'- to 5'-endonucleasic mode. Neo-synthesized pregenomic RNA (pgRNA) are encapsidated together with the P protein, and reverse-transcribed inside the nucleocapsid. Initiation of reverse-transcription occurs first by binding the epsilon loop on the pgRNA genome, and is initiated by protein priming, thereby the 5'-end of (-)DNA is covalently linked to P protein. Partial (+)DNA is synthesized from the (-)DNA template and generates the relaxed circular DNA (RC-DNA) genome. After budding and infection, the RC-DNA migrates in the nucleus, and is converted into a plasmid-like covalently closed circular DNA (cccDNA). The activity of P protein does not seem to be necessary for cccDNA generation, and is presumably released from (+)DNA by host nuclear DNA repair machinery. The sequence is that of Protein P from Marmota monax (Woodchuck).